Here is a 156-residue protein sequence, read N- to C-terminus: MPATRNQDELVRTFKAILKEERFGSQSEIVNALQAEGFGNINQSKVSRMLSKFGAVRTRNAKQEMVYCLPAELGVPTAGSPVKNLVLDVDHNQAMIVVRTSPGAAQLIARLLDSIGKPEGILGTIAGDDTIFICPASIKTIDETLETVRSLFNYSE.

It belongs to the ArgR family.

It is found in the cytoplasm. The protein operates within amino-acid biosynthesis; L-arginine biosynthesis [regulation]. Functionally, regulates arginine biosynthesis genes. The chain is Arginine repressor from Shewanella frigidimarina (strain NCIMB 400).